Consider the following 394-residue polypeptide: Elongation factor Tu 2 (394 aa).

The 195-residue stretch at 10 to 204 folds into the tr-type G domain; sequence KPHVNVGTIG…ALDSYIPEPE (195 aa). Residues 19 to 26 are G1; it reads GHVDHGKT. 19–26 serves as a coordination point for GTP; the sequence is GHVDHGKT. Threonine 26 contributes to the Mg(2+) binding site. A G2 region spans residues 60–64; the sequence is GITIN. The interval 81–84 is G3; sequence DCPG. Residues 81-85 and 136-139 each bind GTP; these read DCPGH and NKCD. A G4 region spans residues 136–139; the sequence is NKCD. The tract at residues 174–176 is G5; sequence SAL.

This sequence belongs to the TRAFAC class translation factor GTPase superfamily. Classic translation factor GTPase family. EF-Tu/EF-1A subfamily. In terms of assembly, monomer.

The protein localises to the cytoplasm. It carries out the reaction GTP + H2O = GDP + phosphate + H(+). Functionally, GTP hydrolase that promotes the GTP-dependent binding of aminoacyl-tRNA to the A-site of ribosomes during protein biosynthesis. In Shewanella oneidensis (strain ATCC 700550 / JCM 31522 / CIP 106686 / LMG 19005 / NCIMB 14063 / MR-1), this protein is Elongation factor Tu 2.